The sequence spans 160 residues: Putative 4-hydroxy-4-methyl-2-oxoglutarate aldolase (160 aa).

Substrate contacts are provided by residues 78-81 and Arg-100; that span reads GDVI. Asp-101 serves as a coordination point for a divalent metal cation.

It belongs to the class II aldolase/RraA-like family. As to quaternary structure, homotrimer. A divalent metal cation is required as a cofactor.

It catalyses the reaction 4-hydroxy-4-methyl-2-oxoglutarate = 2 pyruvate. The enzyme catalyses oxaloacetate + H(+) = pyruvate + CO2. Catalyzes the aldol cleavage of 4-hydroxy-4-methyl-2-oxoglutarate (HMG) into 2 molecules of pyruvate. Also contains a secondary oxaloacetate (OAA) decarboxylase activity due to the common pyruvate enolate transition state formed following C-C bond cleavage in the retro-aldol and decarboxylation reactions. In Mycolicibacterium vanbaalenii (strain DSM 7251 / JCM 13017 / BCRC 16820 / KCTC 9966 / NRRL B-24157 / PYR-1) (Mycobacterium vanbaalenii), this protein is Putative 4-hydroxy-4-methyl-2-oxoglutarate aldolase.